The primary structure comprises 250 residues: Putative B3 domain-containing protein At4g03170 (250 aa).

The segment covering 1 to 12 (MANSTGKPTSST) has biased composition (polar residues). The segment at 1–90 (MANSTGKPTS…EKNQPKRFKK (90 aa)) is disordered. Residues 34-56 (DREEDIDDEDDIDDEVIDDEDYE) show a composition bias toward acidic residues. Residues 72 to 84 (QSREREEETEKNQ) are compositionally biased toward basic and acidic residues. Residues 137–245 (KKQLMSSDVD…KLCFAIHYVK (109 aa)) constitute a DNA-binding region (TF-B3).

It is found in the nucleus. This is Putative B3 domain-containing protein At4g03170 from Arabidopsis thaliana (Mouse-ear cress).